The primary structure comprises 245 residues: Triosephosphate isomerase (245 aa).

4-6 contacts substrate; that stretch reads NWK. The active-site Electrophile is the His-91. The Proton acceptor role is filled by Glu-161. Residues Gly-167, Ser-207, and 228–229 each bind substrate; that span reads GG.

The protein belongs to the triosephosphate isomerase family. As to quaternary structure, homodimer.

Its subcellular location is the cytoplasm. The enzyme catalyses D-glyceraldehyde 3-phosphate = dihydroxyacetone phosphate. It functions in the pathway carbohydrate biosynthesis; gluconeogenesis. Its pathway is carbohydrate degradation; glycolysis; D-glyceraldehyde 3-phosphate from glycerone phosphate: step 1/1. Its function is as follows. Involved in the gluconeogenesis. Catalyzes stereospecifically the conversion of dihydroxyacetone phosphate (DHAP) to D-glyceraldehyde-3-phosphate (G3P). The polypeptide is Triosephosphate isomerase (Chlorobaculum tepidum (strain ATCC 49652 / DSM 12025 / NBRC 103806 / TLS) (Chlorobium tepidum)).